Consider the following 299-residue polypeptide: Glycine--tRNA ligase alpha subunit (299 aa).

It belongs to the class-II aminoacyl-tRNA synthetase family. In terms of assembly, tetramer of two alpha and two beta subunits.

The protein localises to the cytoplasm. It catalyses the reaction tRNA(Gly) + glycine + ATP = glycyl-tRNA(Gly) + AMP + diphosphate. The chain is Glycine--tRNA ligase alpha subunit from Pediococcus pentosaceus (strain ATCC 25745 / CCUG 21536 / LMG 10740 / 183-1w).